A 79-amino-acid polypeptide reads, in one-letter code: Sulfur carrier protein TusA (79 aa).

The Cysteine persulfide intermediate role is filled by Cys16.

Belongs to the sulfur carrier protein TusA family.

It is found in the cytoplasm. Sulfur carrier protein which probably makes part of a sulfur-relay system. This is Sulfur carrier protein TusA from Pseudomonas aeruginosa (strain LESB58).